The primary structure comprises 314 residues: Nerylneryl diphosphate synthase CPT2, chloroplastic (314 aa).

Residues 1–61 constitute a chloroplast transit peptide; it reads MNSSIVSQHF…MSDRGLSKIS (61 aa). The active site involves D97.

It belongs to the UPP synthase family. Mg(2+) is required as a cofactor. In terms of tissue distribution, expressed in stems. Expressed in petiolules. Expressed at low levels in leaf trichomes, old leaf and roots.

Its subcellular location is the plastid. It localises to the chloroplast. It catalyses the reaction 3 isopentenyl diphosphate + dimethylallyl diphosphate = nerylneryl diphosphate + 3 diphosphate. The enzyme catalyses isopentenyl diphosphate + dimethylallyl diphosphate = neryl diphosphate + diphosphate. The catalysed reaction is neryl diphosphate + isopentenyl diphosphate = (2Z,6Z)-farnesyl diphosphate + diphosphate. It carries out the reaction (2Z,6Z)-farnesyl diphosphate + isopentenyl diphosphate = nerylneryl diphosphate + diphosphate. Functionally, uses dimethylallyl diphosphate and isopentenyl diphosphate to catalyze the cis-prenyl chain elongation and produce the 20 carbon product nerylneryl diphosphate. This Solanum lycopersicum (Tomato) protein is Nerylneryl diphosphate synthase CPT2, chloroplastic.